A 154-amino-acid polypeptide reads, in one-letter code: Large ribosomal subunit protein uL13 (154 aa).

The protein belongs to the universal ribosomal protein uL13 family. As to quaternary structure, part of the 50S ribosomal subunit.

This protein is one of the early assembly proteins of the 50S ribosomal subunit, although it is not seen to bind rRNA by itself. It is important during the early stages of 50S assembly. The polypeptide is Large ribosomal subunit protein uL13 (Bartonella henselae (strain ATCC 49882 / DSM 28221 / CCUG 30454 / Houston 1) (Rochalimaea henselae)).